A 362-amino-acid polypeptide reads, in one-letter code: Apelin receptor A (362 aa).

Residues 1-37 (METEGLSPMLYEDDYYYGNETGLQPCDETDWDFSYSL) lie on the Extracellular side of the membrane. Residue Asn-19 is glycosylated (N-linked (GlcNAc...) asparagine). Disulfide bonds link Cys-26–Cys-286 and Cys-108–Cys-185. Residues 38 to 58 (LPVFYMIVFVLGLSGNGVVIF) form a helical membrane-spanning segment. The Cytoplasmic portion of the chain corresponds to 59–76 (TVWKSKPKRRSADTYIGN). A helical transmembrane segment spans residues 77–97 (LALADLAFVVTLPLWATYTAL). The Extracellular segment spans residues 98-110 (GFHWPFGSALCKL). A helical membrane pass occupies residues 111–131 (SSYLVLLNMFASVFCLTCLSF). Over 132–151 (DRYLAIVHSLSSAKLRSRSS) the chain is Cytoplasmic. Residues 152 to 172 (IIVSLAVIWLFSGLLALPSLI) traverse the membrane as a helical segment. The Extracellular portion of the chain corresponds to 173–199 (LRDTRVEGNNTICDLDFSGVSSKENEN). The N-linked (GlcNAc...) asparagine glycan is linked to Asn-181. Residues 200–220 (FWIGGLSILTTVPGFLLPLLL) form a helical membrane-spanning segment. Residues 221–248 (MTIFYCFIGGKVTMHFQNLKKEEQKKKR) lie on the Cytoplasmic side of the membrane. A helical membrane pass occupies residues 249–269 (LLKIIITLVVVFAICWLPFHI). The Extracellular portion of the chain corresponds to 270 to 296 (LKTIHFLDLMGFLELSCSTQNIIVSLH). The chain crosses the membrane as a helical span at residues 297–317 (PYATCLAYVNSCLNPFLYAFF). At 318 to 362 (DLRFRSQCFFFFGFKKVLQGHLSNTSSSLSAQTQKSEIHSLATKV) the chain is on the cytoplasmic side.

The protein belongs to the G-protein coupled receptor 1 family. As to expression, expressed in all blood vessels including the posterior cardinal vein, intersomitic veins and the vitelline vein network. At the gastrula stage, exclusively expressed in the mesodermal layer and at the neurula stage in the lateral plate mesoderm. Larval expression is observed in the endothelium of the primary blood vessels and the forming heart.

It localises to the cell membrane. G protein-coupled receptor for peptide hormones apelin (apln) and apelin receptor early endogenous ligand (apela), that plays a role in the regulation of normal cardiovascular function and fluid homeostasis. When acting as apelin receptor, activates both G(i) protein pathway that inhibits adenylate cyclase activity, and the beta-arrestin pathway that promotes internalization of the receptor. Also functions as mechanoreceptor that is activated by pathological stimuli in a G-protein-independent fashion to induce beta-arrestin signaling, hence eliciting cardiac hypertrophy. However, the presence of apelin ligand blunts cardiac hypertrophic induction from APLNR/APJ on response to pathological stimuli. Plays a key role in early development such as gastrulation, blood vessels formation and heart morphogenesis by acting as a receptor for apela hormone, promoting endoderm and mesendoderm cell migration and regulating the migration of cells fated to become myocardial progenitors, respectively. Promotes angioblast migration toward the embryonic midline, i.e. the position of the future vessel formation, during vasculogenesis. May promote sinus venosus (SV)-derived endothelial cells migration into the developing heart to promote coronary blood vessel development. Required for cardiovascular development, particularly for intersomitic vein angiogenesis by acting as a receptor for apln hormone. Also plays a role in various processes in adults such as regulation of blood vessel formation, blood pressure, heart contractility, and heart failure. Acts upstream of the i/o type of G-alpha proteins in the differentiation of endothelium, erythroid cells, myeloid cells and cardiomyocytes. The sequence is that of Apelin receptor A (aplnr-a) from Xenopus laevis (African clawed frog).